We begin with the raw amino-acid sequence, 219 residues long: Resolvase (219 aa).

The 145-residue stretch at Val-15–Gly-159 folds into the Resolvase/invertase-type recombinase catalytic domain. Residue Ser-23 is the O-(5'-phospho-DNA)-serine intermediate of the active site.

The protein belongs to the site-specific recombinase resolvase family.

In terms of biological role, involved in plasmid partition. This is Resolvase (parA) from Escherichia coli.